Consider the following 314-residue polypeptide: tRNA dimethylallyltransferase (314 aa).

Residue G12–T19 coordinates ATP. T14 to T19 lines the substrate pocket. Interaction with substrate tRNA stretches follow at residues D37–L40 and Q162–R166.

The protein belongs to the IPP transferase family. In terms of assembly, monomer. It depends on Mg(2+) as a cofactor.

It carries out the reaction adenosine(37) in tRNA + dimethylallyl diphosphate = N(6)-dimethylallyladenosine(37) in tRNA + diphosphate. In terms of biological role, catalyzes the transfer of a dimethylallyl group onto the adenine at position 37 in tRNAs that read codons beginning with uridine, leading to the formation of N6-(dimethylallyl)adenosine (i(6)A). The sequence is that of tRNA dimethylallyltransferase from Acinetobacter baumannii (strain SDF).